We begin with the raw amino-acid sequence, 401 residues long: uncharacterized protein (401 aa).

[4Fe-4S] cluster-binding residues include C7, C13, C16, and C94. Q230, Y259, E280, and D328 together coordinate S-adenosyl-L-methionine. The active-site Nucleophile is the C355.

Belongs to the class I-like SAM-binding methyltransferase superfamily. RNA M5U methyltransferase family.

This is an uncharacterized protein from Chlamydia caviae (strain ATCC VR-813 / DSM 19441 / 03DC25 / GPIC) (Chlamydophila caviae).